The primary structure comprises 212 residues: Probable nicotinate-nucleotide adenylyltransferase (212 aa).

Belongs to the NadD family.

It carries out the reaction nicotinate beta-D-ribonucleotide + ATP + H(+) = deamido-NAD(+) + diphosphate. Its pathway is cofactor biosynthesis; NAD(+) biosynthesis; deamido-NAD(+) from nicotinate D-ribonucleotide: step 1/1. Functionally, catalyzes the reversible adenylation of nicotinate mononucleotide (NaMN) to nicotinic acid adenine dinucleotide (NaAD). In Shewanella sp. (strain MR-7), this protein is Probable nicotinate-nucleotide adenylyltransferase.